A 142-amino-acid polypeptide reads, in one-letter code: Augurin-A (142 aa).

Residues 1–28 (MLSEKFHLRLLTLLTLLTALSLTDVASE) form the signal peptide. Propeptides lie at residues 29–66 (SKLEKLLMKRVDRDVKPAAAVAVSPSKAKEFLTSLKRP) and 127–142 (GAASYRHGANVNYDYY).

It belongs to the augurin family.

It is found in the secreted. The protein localises to the cytoplasm. It localises to the apical cell membrane. In terms of biological role, probable hormone. Required for the proper formation of the central nervous system by attenuating cell proliferation during development. The protein is Augurin-A of Danio rerio (Zebrafish).